The chain runs to 392 residues: Digeranylgeranylglycerophospholipid reductase (392 aa).

FAD is bound by residues G15, E34, C45, A46, G48, R99, A123, D279, G291, and I292. Position 370 (V370) interacts with a 2,3-bis-O-(geranylgeranyl)-sn-glycerol 1-phospholipid.

It belongs to the geranylgeranyl reductase family. DGGGPL reductase subfamily. It depends on FAD as a cofactor.

The enzyme catalyses a 2,3-bis-O-phytanyl-sn-glycerol 1-phospholipid + 8 oxidized 2[4Fe-4S]-[ferredoxin] = a 2,3-bis-O-(geranylgeranyl)-sn-glycerol 1-phospholipid + 8 reduced 2[4Fe-4S]-[ferredoxin] + 16 H(+). It carries out the reaction 2,3-bis-O-(phytanyl)-sn-glycerol 1-phosphate + 8 oxidized 2[4Fe-4S]-[ferredoxin] = 2,3-bis-O-(geranylgeranyl)-sn-glycerol 1-phosphate + 8 reduced 2[4Fe-4S]-[ferredoxin] + 16 H(+). It catalyses the reaction a 2,3-bis-O-phytanyl-sn-glycerol 1-phospholipid + 8 A = a 2,3-bis-O-(geranylgeranyl)-sn-glycerol 1-phospholipid + 8 AH2. The catalysed reaction is CDP-2,3-bis-O-(geranylgeranyl)-sn-glycerol + 8 AH2 = CDP-2,3-bis-O-(phytanyl)-sn-glycerol + 8 A. The enzyme catalyses archaetidylserine + 8 AH2 = 2,3-bis-O-phytanyl-sn-glycero-3-phospho-L-serine + 8 A. Its pathway is membrane lipid metabolism; glycerophospholipid metabolism. Its function is as follows. Is involved in the reduction of 2,3-digeranylgeranylglycerophospholipids (unsaturated archaeols) into 2,3-diphytanylglycerophospholipids (saturated archaeols) in the biosynthesis of archaeal membrane lipids. Catalyzes the formation of archaetidic acid (2,3-di-O-phytanyl-sn-glyceryl phosphate) from 2,3-di-O-geranylgeranylglyceryl phosphate (DGGGP) via the hydrogenation of each double bond of the isoprenoid chains. Is also probably able to reduce double bonds of geranyl groups in CDP-2,3-bis-O-(geranylgeranyl)-sn-glycerol and archaetidylserine, thus acting at various stages in the biosynthesis of archaeal membrane lipids. In Methanocella arvoryzae (strain DSM 22066 / NBRC 105507 / MRE50), this protein is Digeranylgeranylglycerophospholipid reductase.